The sequence spans 244 residues: Probable cytokinin riboside 5'-monophosphate phosphoribohydrolase LOGL2 (244 aa).

Residues Glu91, 109–110 (RK), and 126–132 (GYGTLEE) each bind substrate.

Belongs to the LOG family.

The catalysed reaction is N(6)-(dimethylallyl)adenosine 5'-phosphate + H2O = N(6)-dimethylallyladenine + D-ribose 5-phosphate. It carries out the reaction 9-ribosyl-trans-zeatin 5'-phosphate + H2O = trans-zeatin + D-ribose 5-phosphate. Its function is as follows. Cytokinin-activating enzyme working in the direct activation pathway. Phosphoribohydrolase that converts inactive cytokinin nucleotides to the biologically active free-base forms. This is Probable cytokinin riboside 5'-monophosphate phosphoribohydrolase LOGL2 (LOGL2) from Oryza sativa subsp. japonica (Rice).